The primary structure comprises 443 residues: EP1-like glycoprotein 4 (443 aa).

The signal sequence occupies residues 1–22; the sequence is MEFSTTLALFFTLSIFLVGAQA. Residues 29 to 159 enclose the Bulb-type lectin domain; sequence QFRVVNEGGY…NGKFVWQSFD (131 aa). Asn-66, Asn-102, Asn-258, and Asn-269 each carry an N-linked (GlcNAc...) asparagine glycan. Residues 254 to 296 form a WD repeat; that stretch reads GSQFNVSTFLSRPKHNATLSFLRLESDGNIRVWSYSTLATSTA. Positions 356–433 constitute a PAN domain; that stretch reads CDPKTFHYFK…TSLVAYVKAP (78 aa). 2 disulfide bridges follow: Cys-387–Cys-409 and Cys-391–Cys-397. Residue Asn-434 is glycosylated (N-linked (GlcNAc...) asparagine).

Its subcellular location is the secreted. The protein localises to the cell wall. This Arabidopsis thaliana (Mouse-ear cress) protein is EP1-like glycoprotein 4.